Consider the following 402-residue polypeptide: S-adenosylmethionine synthase (402 aa).

Residue 137–142 (GQGSAD) coordinates ATP.

The protein belongs to the AdoMet synthase 2 family. Mg(2+) serves as cofactor.

It carries out the reaction L-methionine + ATP + H2O = S-adenosyl-L-methionine + phosphate + diphosphate. It functions in the pathway amino-acid biosynthesis; S-adenosyl-L-methionine biosynthesis; S-adenosyl-L-methionine from L-methionine: step 1/1. Catalyzes the formation of S-adenosylmethionine from methionine and ATP. The sequence is that of S-adenosylmethionine synthase from Pyrobaculum calidifontis (strain DSM 21063 / JCM 11548 / VA1).